Here is a 371-residue protein sequence, read N- to C-terminus: Putative 26S proteasome regulatory subunit homolog MJ1494 (371 aa).

ATP is bound at residue 161-168 (GPPGTGKT).

The protein belongs to the AAA ATPase family.

Functionally, the 26S proteasome is involved in the ATP-dependent degradation of ubiquitinated proteins. The regulatory (or ATPase) complex confers ATP dependency and substrate specificity to the 26S complex. The protein is Putative 26S proteasome regulatory subunit homolog MJ1494 of Methanocaldococcus jannaschii (strain ATCC 43067 / DSM 2661 / JAL-1 / JCM 10045 / NBRC 100440) (Methanococcus jannaschii).